The following is a 208-amino-acid chain: MFDIGVGELTLIAVVALVVLGPERLPKAARFAGLWVRRARMQWDSVKQELERELEAEELKRSLQDVQASLREAEDQLRNKQQQVEQGARALHDDVSRDIDIRASATPVATPLELAHADWSASPDVDTAAGATDAAGAAHTAPVIAQAQPIAPAPHQTLVPAPHDAIVPAPHAAHLASAPEPVAVVPVDAGTPAASMPSAPAKIQEKQP.

Residues methionine 1–glycine 21 traverse the membrane as a helical segment. The tract at residues aspartate 188–proline 208 is disordered.

It belongs to the TatB family. As to quaternary structure, the Tat system comprises two distinct complexes: a TatABC complex, containing multiple copies of TatA, TatB and TatC subunits, and a separate TatA complex, containing only TatA subunits. Substrates initially bind to the TatABC complex, which probably triggers association of the separate TatA complex to form the active translocon.

It is found in the cell inner membrane. Functionally, part of the twin-arginine translocation (Tat) system that transports large folded proteins containing a characteristic twin-arginine motif in their signal peptide across membranes. Together with TatC, TatB is part of a receptor directly interacting with Tat signal peptides. TatB may form an oligomeric binding site that transiently accommodates folded Tat precursor proteins before their translocation. This chain is Sec-independent protein translocase protein TatB, found in Xanthomonas axonopodis pv. citri (strain 306).